The following is a 550-amino-acid chain: MTPADLAELLKSTATAVLSEHALDTSALPQTVVVERPRNPEHGDYASNVALQLAKKVGANPRELAGWIAEALTKADGIASAEVAGPGFINLRLETSAQAKIVNAIIDAGSGFGHSELMAAHKVNLEFVSANPTGPIHIGGTRWAAVGDALGRLLSTQGADVVREYYFNDHGAQIDRFANSLIAAAKGEPTPDDGYAGTYINDIAARVLQKAPDALSLPDAQMHETFREIGVDLMFSHIKESLHEFGTDFDVYTHEDSMHSTGRVDQAVARLRETGNIYEKDGATWLRSSSFGDDKDRVVIKSDGKPAYIAGDLAYYLDKRERGFDLCIYMLGADHHGYIARLKAAAAAFGEDPATVEVLIGQMVNLVRDGQPVRMSKRAGTVITLDDLVEAIGVDAARYSLIRSSVDTPIDIDLALWSSASNENPVYYVQYAHARLSALARNAAELGLIPDTDHLELLSHEKEGVLLRTLGDFPRMLKTAASLREPHRVCRYLEDLAGDYHRFYDSCRVLPQGDEEPTQLHTARLALCQATRQVIANGLGILGVTAPERM.

The 'HIGH' region signature appears at 130 to 140 (ANPTGPIHIGG).

Belongs to the class-I aminoacyl-tRNA synthetase family. Monomer.

It localises to the cytoplasm. The enzyme catalyses tRNA(Arg) + L-arginine + ATP = L-arginyl-tRNA(Arg) + AMP + diphosphate. This Mycobacterium marinum (strain ATCC BAA-535 / M) protein is Arginine--tRNA ligase.